Here is a 311-residue protein sequence, read N- to C-terminus: Putative ankyrin repeat protein RF_0923 (311 aa).

ANK repeat units follow at residues 42–71 (IDNT…EQAI), 77–106 (NGNT…PQAI), 112–141 (NGNT…PQAI), 147–176 (NGNT…EQAI), and 182–213 (KGCT…AINH).

This is Putative ankyrin repeat protein RF_0923 from Rickettsia felis (strain ATCC VR-1525 / URRWXCal2) (Rickettsia azadi).